Consider the following 145-residue polypeptide: Ribosomal RNA large subunit methyltransferase H (145 aa).

Residues Leu68, Gly95, and 113 to 118 each bind S-adenosyl-L-methionine; that span reads FSKMTF.

Belongs to the RNA methyltransferase RlmH family. Homodimer.

Its subcellular location is the cytoplasm. It catalyses the reaction pseudouridine(1915) in 23S rRNA + S-adenosyl-L-methionine = N(3)-methylpseudouridine(1915) in 23S rRNA + S-adenosyl-L-homocysteine + H(+). Its function is as follows. Specifically methylates the pseudouridine at position 1915 (m3Psi1915) in 23S rRNA. This is Ribosomal RNA large subunit methyltransferase H from Mycoplasmopsis pulmonis (strain UAB CTIP) (Mycoplasma pulmonis).